The sequence spans 138 residues: Acidic phospholipase A2 Cvv-E6b (138 aa).

The signal sequence occupies residues 1–16 (MRTLWILAVLLLGVEG). Disulfide bonds link C42–C131, C44–C60, C59–C111, C65–C138, C66–C104, C73–C97, and C91–C102. Positions 43, 45, and 47 each coordinate Ca(2+). H63 is a catalytic residue. Residue D64 participates in Ca(2+) binding. D105 is a catalytic residue.

It depends on Ca(2+) as a cofactor. As to expression, expressed by the venom gland.

It is found in the secreted. It catalyses the reaction a 1,2-diacyl-sn-glycero-3-phosphocholine + H2O = a 1-acyl-sn-glycero-3-phosphocholine + a fatty acid + H(+). In terms of biological role, snake venom phospholipase A2 (PLA2) that shows very low inhibition of ADP-induced platelet aggregation in platelet-rich plasma of human, rabbit and guinea pig. PLA2 catalyzes the calcium-dependent hydrolysis of the 2-acyl groups in 3-sn-phosphoglycerides. This Crotalus viridis viridis (Prairie rattlesnake) protein is Acidic phospholipase A2 Cvv-E6b.